A 205-amino-acid chain; its full sequence is Endothelial cell-specific chemotaxis regulator (205 aa).

Positions 1-24 (MGTAGAMQLCWVILGFLLFRGHNS) are cleaved as a signal peptide. At 25–124 (QPTMTQTSSS…TSETVLTVAA (100 aa)) the chain is on the extracellular side. Polar residues-rich tracts occupy residues 49-71 (SSNP…STGT) and 86-101 (SRDT…TTMS). A disordered region spans residues 49 to 101 (SSNPGYIPSSEANRPSHLSSTGTPGAGVPSSGRDGGTSRDTFQTVPPNSTTMS). Residues 125–145 (FGVISFIVILVVVVIILVGVV) form a helical membrane-spanning segment. Over 146–205 (SLRFKCRKSKESEDPQKPGSSGLSESCSTANGEKDSITLISMKNINMNNGKQSLSAEKVL) the chain is Cytoplasmic. The segment at 153–175 (KSKESEDPQKPGSSGLSESCSTA) is disordered. Polar residues predominate over residues 163 to 175 (PGSSGLSESCSTA). S198 bears the Phosphoserine mark.

The protein belongs to the ECSCR family. Interacts with FLNA. Interacts with the 20S proteasome subunit PSMA7. Post-translationally, may be heavily O-glycosylated. Highest expression in endothelial cells. Also detected in vascular smooth muscle, macrophages, lymphocytes, and mast cells.

It is found in the cell membrane. The protein localises to the cytoplasm. Its function is as follows. Regulates endothelial chemotaxis and tube formation. Has a role in angiogenesis and apoptosis via modulation of the actin cytoskeleton and facilitation of proteasomal degradation of the apoptosis inhibitors BIRC3/IAP1 and BIRC2/IAP2. The polypeptide is Endothelial cell-specific chemotaxis regulator (ECSCR) (Homo sapiens (Human)).